The following is a 380-amino-acid chain: D-threo-3-hydroxyaspartate dehydratase (380 aa).

N6-(pyridoxal phosphate)lysine is present on Lys-43.

Belongs to the DSD1 family. As to quaternary structure, monomer. Requires pyridoxal 5'-phosphate as cofactor. The cofactor is Mn(2+). It depends on Co(2+) as a cofactor. Ni(2+) is required as a cofactor.

The enzyme catalyses (3R)-3-hydroxy-D-aspartate = oxaloacetate + NH4(+). With respect to regulation, strongly inhibited by hydroxylamine. Modestly inhibited by EDTA. Functionally, catalyzes the deamination of D-threo-3-hydroxyaspartate (D-THA). Also exhibits dehydratase activity towards L-threo-3-hydroxyaspartate (L-THA), L-erythro-3-hydroxyaspartate (L-EHA) and D-serine. This is D-threo-3-hydroxyaspartate dehydratase (dthadh) from Delftia sp. (strain HT23).